The chain runs to 287 residues: Acetyl-coenzyme A carboxylase carboxyl transferase subunit beta (287 aa).

The CoA carboxyltransferase N-terminal domain maps to 25-287 (VWTKCSACEQ…KMLNTHVIEE (263 aa)). Zn(2+)-binding residues include C29, C32, C48, and C51. Residues 29-51 (CSACEQVLYRAELERNLEVCPKC) form a C4-type zinc finger.

This sequence belongs to the AccD/PCCB family. In terms of assembly, acetyl-CoA carboxylase is a heterohexamer composed of biotin carboxyl carrier protein (AccB), biotin carboxylase (AccC) and two subunits each of ACCase subunit alpha (AccA) and ACCase subunit beta (AccD). It depends on Zn(2+) as a cofactor.

Its subcellular location is the cytoplasm. It catalyses the reaction N(6)-carboxybiotinyl-L-lysyl-[protein] + acetyl-CoA = N(6)-biotinyl-L-lysyl-[protein] + malonyl-CoA. Its pathway is lipid metabolism; malonyl-CoA biosynthesis; malonyl-CoA from acetyl-CoA: step 1/1. Component of the acetyl coenzyme A carboxylase (ACC) complex. Biotin carboxylase (BC) catalyzes the carboxylation of biotin on its carrier protein (BCCP) and then the CO(2) group is transferred by the transcarboxylase to acetyl-CoA to form malonyl-CoA. The chain is Acetyl-coenzyme A carboxylase carboxyl transferase subunit beta from Aeromonas salmonicida (strain A449).